The primary structure comprises 431 residues: Gamma-glutamyl phosphate reductase (431 aa).

It belongs to the gamma-glutamyl phosphate reductase family.

It is found in the cytoplasm. The catalysed reaction is L-glutamate 5-semialdehyde + phosphate + NADP(+) = L-glutamyl 5-phosphate + NADPH + H(+). It functions in the pathway amino-acid biosynthesis; L-proline biosynthesis; L-glutamate 5-semialdehyde from L-glutamate: step 2/2. Its function is as follows. Catalyzes the NADPH-dependent reduction of L-glutamate 5-phosphate into L-glutamate 5-semialdehyde and phosphate. The product spontaneously undergoes cyclization to form 1-pyrroline-5-carboxylate. This chain is Gamma-glutamyl phosphate reductase, found in Acetivibrio thermocellus (strain ATCC 27405 / DSM 1237 / JCM 9322 / NBRC 103400 / NCIMB 10682 / NRRL B-4536 / VPI 7372) (Clostridium thermocellum).